Here is a 480-residue protein sequence, read N- to C-terminus: CASP8 and FADD-like apoptosis regulator (480 aa).

DED domains follow at residues Met-1–Lys-73 and Asp-92–Lys-170. The tract at residues Met-1 to Lys-195 is interaction with CASP8. The tract at residues Met-1 to Ser-227 is interaction with FADD. The interval Met-1 to Tyr-305 is interaction with CASP8 propeptide. The segment at Met-1–Arg-435 is not proteolytically processed and involved in apoptosis inhibition. Residues Lys-192–Arg-435 form an interaction with CASP3 region. The interval Lys-192 to Thr-480 is interaction with TRAF1 and TRAF2. Positions Leu-217 to Thr-480 are interaction with CASP8 subunits p18 and p10. The interval Glu-263–Gln-358 is caspase. An interaction with CASP8 region spans residues Ser-370 to Thr-480.

The protein belongs to the peptidase C14A family. In terms of assembly, TNFRSF6 stimulation triggers recruitment to the death-inducing signaling complex (DISC) formed by TNFRSF6, FADD and CASP8. A proteolytic fragment (p43) stays associated with the DISC. Also interacts with FADD, CASP8, CASP3, TRAF1, TRAF2 and Bcl-X(L) (in vitro). Interacts with RIPK1. As to quaternary structure, (Microbial infection) Interacts with HBV protein X. In terms of processing, proteolytically processed by CASP8 generating subunit p43 and p12. As to expression, widely expressed. Higher expression in skeletal muscle, pancreas, heart, kidney, placenta, and peripheral blood leukocytes. Also detected in diverse cell lines. Isoform 8 is predominantly expressed in testis and skeletal muscle.

Its function is as follows. Apoptosis regulator protein which may function as a crucial link between cell survival and cell death pathways in mammalian cells. Acts as an inhibitor of TNFRSF6 mediated apoptosis. A proteolytic fragment (p43) is likely retained in the death-inducing signaling complex (DISC) thereby blocking further recruitment and processing of caspase-8 at the complex. Full length and shorter isoforms have been shown either to induce apoptosis or to reduce TNFRSF-triggered apoptosis. Lacks enzymatic (caspase) activity. In Homo sapiens (Human), this protein is CASP8 and FADD-like apoptosis regulator (CFLAR).